Reading from the N-terminus, the 397-residue chain is Serpin B10 (397 aa).

A Nuclear localization signal motif is present at residues 74-77 (KKRK).

This sequence belongs to the serpin family. Ov-serpin subfamily. Expressed in many tissues, including brain, heart, kidney, liver, lung, prostate, skin, spleen and stomach.

It localises to the nucleus. The protein localises to the cytoplasm. Its function is as follows. Protease inhibitor that may play a role in the regulation of protease activities during hematopoiesis and apoptosis induced by TNF. May regulate protease activities in the cytoplasm and in the nucleus. Inhibits plasmin. In Rattus norvegicus (Rat), this protein is Serpin B10 (Serpinb10).